A 567-amino-acid polypeptide reads, in one-letter code: 2-succinyl-5-enolpyruvyl-6-hydroxy-3-cyclohexene-1-carboxylate synthase (567 aa).

It belongs to the TPP enzyme family. MenD subfamily. As to quaternary structure, homodimer. Requires Mg(2+) as cofactor. Mn(2+) serves as cofactor. The cofactor is thiamine diphosphate.

It catalyses the reaction isochorismate + 2-oxoglutarate + H(+) = 5-enolpyruvoyl-6-hydroxy-2-succinyl-cyclohex-3-ene-1-carboxylate + CO2. It functions in the pathway quinol/quinone metabolism; 1,4-dihydroxy-2-naphthoate biosynthesis; 1,4-dihydroxy-2-naphthoate from chorismate: step 2/7. Its pathway is quinol/quinone metabolism; menaquinone biosynthesis. Its function is as follows. Catalyzes the thiamine diphosphate-dependent decarboxylation of 2-oxoglutarate and the subsequent addition of the resulting succinic semialdehyde-thiamine pyrophosphate anion to isochorismate to yield 2-succinyl-5-enolpyruvyl-6-hydroxy-3-cyclohexene-1-carboxylate (SEPHCHC). The polypeptide is 2-succinyl-5-enolpyruvyl-6-hydroxy-3-cyclohexene-1-carboxylate synthase (Shewanella loihica (strain ATCC BAA-1088 / PV-4)).